A 61-amino-acid polypeptide reads, in one-letter code: Alpha-conotoxin-like Lp1.6a (61 aa).

The signal sequence occupies residues 1–21; the sequence is MGMRMMFIIFLFVVLATTVVS. Residues 22–44 constitute a propeptide that is removed on maturation; sequence FTSGRASDGRNAPANNKVSDLIR. At Gln45 the chain carries Pyrrolidone carboxylic acid. 2 disulfide bridges follow: Cys47/Cys53 and Cys48/Cys60. Cys60 bears the Cysteine amide mark.

Belongs to the conotoxin A superfamily. Expressed by the venom duct.

The protein resides in the secreted. Alpha-conotoxins act on postsynaptic membranes, they bind to the nicotinic acetylcholine receptors (nAChR) and thus inhibit them. The sequence is that of Alpha-conotoxin-like Lp1.6a from Conus leopardus (Leopard cone).